Consider the following 548-residue polypeptide: ATP synthase subunit alpha, mitochondrial (548 aa).

Residue 209–216 (GDRQTGKT) coordinates ATP.

It belongs to the ATPase alpha/beta chains family. In terms of assembly, F-type ATPases have 2 components, CF(1) - the catalytic core - and CF(0) - the membrane proton channel. CF(1) has five subunits: alpha(3), beta(3), gamma(1), delta(1), epsilon(1). CF(0) has three main subunits: a, b and c.

It is found in the mitochondrion. The protein resides in the mitochondrion inner membrane. Mitochondrial membrane ATP synthase (F(1)F(0) ATP synthase or Complex V) produces ATP from ADP in the presence of a proton gradient across the membrane which is generated by electron transport complexes of the respiratory chain. F-type ATPases consist of two structural domains, F(1) - containing the extramembraneous catalytic core, and F(0) - containing the membrane proton channel, linked together by a central stalk and a peripheral stalk. During catalysis, ATP synthesis in the catalytic domain of F(1) is coupled via a rotary mechanism of the central stalk subunits to proton translocation. Subunits alpha and beta form the catalytic core in F(1). Rotation of the central stalk against the surrounding alpha(3)beta(3) subunits leads to hydrolysis of ATP in three separate catalytic sites on the beta subunits. Subunit alpha does not bear the catalytic high-affinity ATP-binding sites. The sequence is that of ATP synthase subunit alpha, mitochondrial (ATP1) from Kluyveromyces lactis (strain ATCC 8585 / CBS 2359 / DSM 70799 / NBRC 1267 / NRRL Y-1140 / WM37) (Yeast).